The following is a 100-amino-acid chain: Nucleoid-associated protein ckrop_0143 (100 aa).

This sequence belongs to the YbaB/EbfC family. Homodimer.

The protein localises to the cytoplasm. Its subcellular location is the nucleoid. Its function is as follows. Binds to DNA and alters its conformation. May be involved in regulation of gene expression, nucleoid organization and DNA protection. This is Nucleoid-associated protein ckrop_0143 from Corynebacterium kroppenstedtii (strain DSM 44385 / JCM 11950 / CIP 105744 / CCUG 35717).